Here is a 270-residue protein sequence, read N- to C-terminus: Phosphoserine phosphatase (270 aa).

Asp-67 acts as the Nucleophile in catalysis. Positions 67 and 69 each coordinate Mg(2+). Asp-69 functions as the Proton donor in the catalytic mechanism. Substrate is bound by residues Glu-76, Arg-112, 156-157 (SG), and Lys-205. Asp-227 provides a ligand contact to Mg(2+).

This sequence belongs to the HAD-like hydrolase superfamily. SerB family. Mg(2+) serves as cofactor.

It carries out the reaction O-phospho-L-serine + H2O = L-serine + phosphate. It catalyses the reaction O-phospho-D-serine + H2O = D-serine + phosphate. It functions in the pathway amino-acid biosynthesis; L-serine biosynthesis; L-serine from 3-phospho-D-glycerate: step 3/3. Functionally, catalyzes the last step in the biosynthesis of serine from carbohydrates. The reaction mechanism proceeds via the formation of a phosphoryl-enzyme intermediates. The sequence is that of Phosphoserine phosphatase (aay) from Drosophila melanogaster (Fruit fly).